Consider the following 369-residue polypeptide: Flagellar P-ring protein (369 aa).

The first 22 residues, 1 to 22 (MIKLKQLIAATLLLSAAFGAHA), serve as a signal peptide directing secretion.

This sequence belongs to the FlgI family. In terms of assembly, the basal body constitutes a major portion of the flagellar organelle and consists of four rings (L,P,S, and M) mounted on a central rod.

Its subcellular location is the periplasm. The protein resides in the bacterial flagellum basal body. In terms of biological role, assembles around the rod to form the L-ring and probably protects the motor/basal body from shearing forces during rotation. The polypeptide is Flagellar P-ring protein (Pseudomonas syringae pv. tomato (strain ATCC BAA-871 / DC3000)).